The sequence spans 189 residues: Chitin synthase 2 (189 aa).

It belongs to the chitin synthase family. Class II subfamily.

Its subcellular location is the cell membrane. The catalysed reaction is [(1-&gt;4)-N-acetyl-beta-D-glucosaminyl](n) + UDP-N-acetyl-alpha-D-glucosamine = [(1-&gt;4)-N-acetyl-beta-D-glucosaminyl](n+1) + UDP + H(+). Polymerizes chitin, a structural polymer of the cell wall and septum, by transferring the sugar moiety of UDP-GlcNAc to the non-reducing end of the growing chitin polymer. The polypeptide is Chitin synthase 2 (CHS2) (Xylohypha bantiana).